A 77-amino-acid chain; its full sequence is UPF0401 protein UTI89_C4989 (77 aa).

This sequence belongs to the UPF0401 family.

The sequence is that of UPF0401 protein UTI89_C4989 from Escherichia coli (strain UTI89 / UPEC).